Reading from the N-terminus, the 2190-residue chain is MNFHKGQPKEDLRVLFGPQCPDITDSITHIRDAISKDPTGLGFLTNILDELPSLWPTIAGAWPALKNVEGENQLLALGRLFEHESEVRVEASNLMMTPITVMRHVVDFWNLQDVATHPAFPSSSLSETEMPRIVDTQGFCVGLLAAIAVACSRNTQEFQYVASNAIRLSLCIGALVDLDEILCGSTTSLAVRWESVEDFNHLEKILNNNTEIPKGYTSCYTDVKSVTITIPNDSAERVKQEIHDHGLRTKQLSLRGRFHHEAHREGIQHIMKLCMNDSRFKLPRSDALLTPLRSSQGGEIFQQEALLHTVALDSILCAKANWYDVVSALINSTEMTVDQSRLLSIGPEEFVPRSARSRSVARRELESYGMQGFANESPQPSTASLSNSVQTFDSRPQAAEASPIAITGMACRYPNADTLAQLWELLELGRCTVKSPPESRFHMSDLQREPKGPFWGHFLERPDVFDHRFFNISAREAESMDPQQRVALQVAYEAMESAGYLGWQPNRLSQDIGCYVGVGSEDYTENVASRNANAFSITGTLQSFIAGRISHHFGWSGPSISLDTACSSAAVAIHLACKALQTNDCKIALAGGVNVLTNPRVYQNLSAASFLSPSGACKPFDASADGYCRGEGAGLFVLRPLQDAIDNGDPILGVIAGSAVNQGSNNSPITVPDAEAQRSLYNKAMSLAGVSPDEVTYVEAHGTGTQVGDPIELDSLRRTFGGPHRRNNLHIGSIKGNIGHTETSSGAAGLLKTILMLQQQRIPRQANFNQLNPKVKSLTPDRLVIASESTEWVSTKRVAMVSNYGASGSNAALIVKEHAPIGSEQNGTAPEYIQNKLAYNLAMKQNRDLPLNLTFSTSSDTTSLGARLEAISTGASADLIQKRPSNEPPVVLCFGGQNGLTATISKEVFDASALLRTHLEDCEEVGRTLGLLSLFPTIFSSAPITNIIHLHFILFSIQYASAKAWLDSGLRVSRIVGHSFGQLTALSVAGSLSVRDGIHLVTERARLIESSWGPESGIMLAVEGTEIEVQQLLDQTVESIEAIENAAARTPSASNLRLTRLQNSHAFHSRLVDSIVPGIMEVAGSLVYQTPIIPIEACSASGDWSTITAAEIVEHSRMPVYFRRAVERVAEKLQAPAVWLEAGSASPIIPMVRRVLESSSVANTYHKIDLGGSSGAQNLANVTSALWAQGVHVQFWPFDRAQHASFKWMNLPPYQFAQNSHWVDFDPAAFSSAGPSSGKQSAGQEAGLLCQLSESPDERLYHVNIQDALYRACTQGHAVLNQTLCPASMYMEMVLRAAASIFPTGNASEPAMSHIEDLTISSPLVLDPQGKVFLRLTRDGAGPTRPWLFSIFSSESNDHTLVHAEGTVCLHQERSRALARFQSMDRLLDSARSKTIEADPASNGLKGSTVYAALESVTNYGDYFRGVKQVFANGREASGLVSMMPSTTETNCNPILLDNFLQVAGIHVNCLSDRQSSEVFVCNAIGETFVINSLLKQENGASPSTWKVYTSYVRPSKTEIACDIYVMDCQTDTLSAAMMGVRFTSVSIRSLTRALAKLNNNVLETAEAQSVVEAAIPAEQSVVTATPSAPAADGHAANDLATVQEMLCELFGVSVAEVSPSVSLVDIGVDSLMSTEVLSEIKKRFQVDMSYTTLVDIPNIQGLVEHIFPGHSHAAPSRPVVEKAPVQSVAPQAVSHVPTPASNGPPLVSVARQCFDTTHAAVSHTSDAHWAGFFHTTYPKQMSLLTAYILEAFRALGSSLEASEPNEVLTPIAVLPRHEQLRKHLYKILDSVGLVRQMSTGELTLRQSGFEWVDWTNNETVESNALRVIVASPTGNSSAATMSPSKPIKMETVVWGERDNLQLRADIYYPETVDTTRKQRPIALMIHGGGHVMLSRKDIRPAQTQTLLDAGFLPVSIDYRLCPEVSLAEGPMADARDALSWVRRVLPNIPLLRADIRPDGNQVVAIGWSTGGHLAMTLPFTAPAAGIPAPDAVLAFYCPTNYEDPFWSNPNFPFGQTVASNEMEYDVWEGLQSMPIAGYNPALKERPLGGWMSTRDPRSRIALHMNWTGQTLPVLLKACTIKGNTEKCSPDDLSRPTEEDIQAVSPNYQIRVGRYNTPTFLIHGTSDDLVPCAQTESTHGALTASGVEAELRVVQEAAHLFDLYPASHAGQEAKAAVAEGYEFLRTHVQL.

The N-terminal acylcarrier protein transacylase domain (SAT) stretch occupies residues 14–268 (VLFGPQCPDI…HHEAHREGIQ (255 aa)). The region spanning 401 to 817 (ASPIAITGMA…GSNAALIVKE (417 aa)) is the Ketosynthase family 3 (KS3) domain. Catalysis depends on for beta-ketoacyl synthase activity residues Cys-566, His-701, and His-740. Residues 893–1190 (CFGGQNGLTA…NVTSALWAQG (298 aa)) are malonyl-CoA:ACP transacylase (MAT) domain. Ser-979 acts as the For acyl/malonyl transferase activity in catalysis. Residues 1243 to 1375 (GQEAGLLCQL…GTVCLHQERS (133 aa)) are N-terminal hotdog fold. Positions 1243–1552 (GQEAGLLCQL…FTSVSIRSLT (310 aa)) constitute a PKS/mFAS DH domain. The product template (PT) domain stretch occupies residues 1251 to 1556 (QLSESPDERL…SIRSLTRALA (306 aa)). His-1277 serves as the catalytic Proton acceptor; for dehydratase activity. The interval 1401–1552 (ASNGLKGSTV…FTSVSIRSLT (152 aa)) is C-terminal hotdog fold. Asp-1458 (proton donor; for dehydratase activity) is an active-site residue. Residues 1597–1671 (ANDLATVQEM…GLVEHIFPGH (75 aa)) form the Carrier domain. At Ser-1631 the chain carries O-(pantetheine 4'-phosphoryl)serine. Residues 1840-2187 (ATMSPSKPIK…AEGYEFLRTH (348 aa)) form a methyltransferase (CMeT) domain region. Residues Ser-1969, Asp-2127, and His-2159 each act as for thioesterase activity in the active site.

Its subcellular location is the cytoplasm. It localises to the cytosol. It catalyses the reaction 3 malonyl-CoA + acetyl-CoA + S-adenosyl-L-methionine + H(+) = 5-methylorsellinate + S-adenosyl-L-homocysteine + 3 CO2 + 4 CoA. It functions in the pathway secondary metabolite biosynthesis; terpenoid biosynthesis. In terms of biological role, non-reducing polyketide synthase; part of the gene cluster that mediates the biosynthesis of mycophenolic acid (MPA), the first isolated antibiotic natural product in the world obtained from a culture of Penicillium brevicompactum in 1893. MpaC' catalyzes the synthesis of 5-methylorsellinic acid (5MOA) via the condensation of 1 acetyl-CoA starter unit with 3 malonyl-CoA units and one methylation step. The first step of the pathway is the synthesis of 5-methylorsellinic acid (5MOA) by the cytosolic polyketide synthase mpaC. 5MOA is then converted to the phthalide compound 5,7-dihydroxy-4,6-dimethylphthalide (DHMP) by the endoplasmic reticulum-bound cytochrome P450 monooxygenase mpaDE. MpaDE first catalyzes hydroxylation of 5-MOA to 4,6-dihydroxy-2-(hydroxymethyl)-3-methylbenzoic acid (DHMB). MpaDE then acts as a lactone synthase that catalyzes the ring closure to convert DHMB into DHMP. The next step is the prenylation of DHMP by the Golgi apparatus-associated prenyltransferase mpaA to yield farnesyl-DHMP (FDHMP). The ER-bound oxygenase mpaB then mediates the oxidative cleavage the C19-C20 double bond in FDHMP to yield FDHMP-3C via a mycophenolic aldehyde intermediate. The O-methyltransferase mpaG catalyzes the methylation of FDHMP-3C to yield MFDHMP-3C. After the cytosolic methylation of FDHMP-3C, MFDHMP-3C enters into peroxisomes probably via free diffusion due to its low molecular weight. Upon a peroxisomal CoA ligation reaction, catalyzed by a beta-oxidation component enzyme acyl-CoA ligase ACL891, MFDHMP-3C-CoA would then be restricted to peroxisomes for the following beta-oxidation pathway steps. The peroxisomal beta-oxidation machinery than converts MFDHMP-3C-CoA into MPA_CoA, via a beta-oxidation chain-shortening process. Finally mpaH acts as a peroxisomal acyl-CoA hydrolase with high substrate specificity toward MPA-CoA to release the final product MPA. This is Non-reducing polyketide synthase mapC' from Penicillium brevicompactum.